A 106-amino-acid polypeptide reads, in one-letter code: Large ribosomal subunit protein uL24 (106 aa).

Residues 84–97 (EKIGRELGAKEKAR) are compositionally biased toward basic and acidic residues. The disordered stretch occupies residues 84 to 106 (EKIGRELGAKEKARLQKRKAAAK).

Belongs to the universal ribosomal protein uL24 family. In terms of assembly, part of the 50S ribosomal subunit.

Functionally, one of two assembly initiator proteins, it binds directly to the 5'-end of the 23S rRNA, where it nucleates assembly of the 50S subunit. In terms of biological role, one of the proteins that surrounds the polypeptide exit tunnel on the outside of the subunit. The sequence is that of Large ribosomal subunit protein uL24 from Anaeromyxobacter sp. (strain K).